The following is a 371-amino-acid chain: Barbiturase 2 (371 aa).

The tract at residues 1–104 (MTRPIEVRKV…TIFAYAPEGR (104 aa)) is RU A. Residues R53 and 83 to 84 (SG) each bind substrate. The tract at residues 112–247 (RVTVGYAMSE…AQIVVVGNAR (136 aa)) is RU B. Residue K162 is part of the active site. Substrate is bound by residues N194 and 230–231 (SS). The active-site Nucleophile is the S230. Residues 253 to 371 (FRVGHSIMKD…PVIAIVDLEA (119 aa)) are RU C. E303 provides a ligand contact to Mg(2+). Residues K330 and 349-350 (SV) each bind substrate. Mg(2+) is bound by residues A352, Q355, G356, P357, and G360.

Belongs to the cyclic amide hydrolase (CyAH) family. Homotetramer.

The catalysed reaction is barbiturate + H2O = 3-oxo-3-ureidopropanoate. It functions in the pathway pyrimidine metabolism; uracil degradation via oxidative pathway; malonate and urea from uracil: step 2/3. Its function is as follows. Responsible for the hydrolysis of barbituric acid (2,4,6-trihydroxy-1,3-pyrimidine), an intermediate in the oxidative catabolism of pyrimidines. Catalyzes the hydrolytic opening of the pyrimidine ring of barbituric acid to yield ureidomalonic acid. Can also use cyanuric acid as a substrate, albeit with lower efficiency. The polypeptide is Barbiturase 2 (Nocardioides sp. (strain ATCC BAA-499 / JS614)).